A 548-amino-acid chain; its full sequence is Chaperonin GroEL (548 aa).

Residues 30-33 (TLGP), K51, 87-91 (DGTTT), G415, 479-481 (NAA), and D495 each bind ATP. Positions 526-548 (REDKSSDVASSPAGGMGGMGGMM) are disordered. The span at 539–548 (GGMGGMGGMM) shows a compositional bias: gly residues.

The protein belongs to the chaperonin (HSP60) family. Forms a cylinder of 14 subunits composed of two heptameric rings stacked back-to-back. Interacts with the co-chaperonin GroES.

It is found in the cytoplasm. It carries out the reaction ATP + H2O + a folded polypeptide = ADP + phosphate + an unfolded polypeptide.. Together with its co-chaperonin GroES, plays an essential role in assisting protein folding. The GroEL-GroES system forms a nano-cage that allows encapsulation of the non-native substrate proteins and provides a physical environment optimized to promote and accelerate protein folding. The protein is Chaperonin GroEL of Buchnera aphidicola subsp. Schizaphis graminum (strain Sg).